The primary structure comprises 130 residues: Seminal plasma protein pB1 (130 aa).

The first 25 residues, 1-25, serve as a signal peptide directing secretion; the sequence is MAPRLGIFLLWAGVSVFLPLDPVNG. 2 Fibronectin type-II domains span residues 39 to 83 and 84 to 130; these read TSDD…YCRS and TDYA…WRYC. 4 disulfide bridges follow: Cys44–Cys68, Cys58–Cys81, Cys89–Cys115, and Cys103–Cys130.

This sequence belongs to the seminal plasma protein family. Component of seminal plasma.

Its subcellular location is the secreted. Its function is as follows. May form a complex with spermadhesin AQN-1 which possesses phosphorylcholine-binding activity. The sequence is that of Seminal plasma protein pB1 from Sus scrofa (Pig).